A 726-amino-acid polypeptide reads, in one-letter code: Catalase-peroxidase (726 aa).

The segment covering 1 to 12 (MSTPSDQHNTLS) has biased composition (polar residues). A disordered region spans residues 1-34 (MSTPSDQHNTLSAGKCPFHQGNSNQTAGGGTSSR). The segment at residues 105–226 (WHSAGTYRSA…LGATEMGLIY (122 aa)) is a cross-link (tryptophyl-tyrosyl-methioninium (Trp-Tyr) (with M-252)). The active-site Proton acceptor is the histidine 106. A cross-link (tryptophyl-tyrosyl-methioninium (Tyr-Met) (with W-105)) is located at residues 226–252 (YVNPEGPNHSGDPASAAPAIRATFGNM). Histidine 267 provides a ligand contact to heme b.

Belongs to the peroxidase family. Peroxidase/catalase subfamily. As to quaternary structure, homodimer or homotetramer. It depends on heme b as a cofactor. In terms of processing, formation of the three residue Trp-Tyr-Met cross-link is important for the catalase, but not the peroxidase activity of the enzyme.

The catalysed reaction is H2O2 + AH2 = A + 2 H2O. It carries out the reaction 2 H2O2 = O2 + 2 H2O. Bifunctional enzyme with both catalase and broad-spectrum peroxidase activity. The chain is Catalase-peroxidase from Cronobacter sakazakii (strain ATCC BAA-894) (Enterobacter sakazakii).